Consider the following 343-residue polypeptide: SH2 domain-containing adapter protein D (343 aa).

The interval 1–176 is disordered; sequence MAKWLRDYLN…PADEYDQPWE (176 aa). Basic and acidic residues-rich tracts occupy residues 29–40 and 73–82; these read DILRAYREQKDL and IKVEAADMAR. Acidic residues predominate over residues 92 to 102; that stretch reads EEPEAETEYSD. The span at 160 to 176 shows a compositional bias: basic and acidic residues; sequence RPLEDERPADEYDQPWE. The 96-residue stretch at 225–320 folds into the SH2 domain; the sequence is WFHGPLSRAE…AEHLALLYPV (96 aa). The disordered stretch occupies residues 322 to 343; sequence SSQSSQGPCTLAAKPERGQGDP.

Tyrosine phosphorylated by ABL. Specifically expressed in brain.

In terms of biological role, may function as an adapter protein. This is SH2 domain-containing adapter protein D (Shd) from Mus musculus (Mouse).